Consider the following 2457-residue polypeptide: Large tegument protein deneddylase (2457 aa).

Residues 1–234 (MALPASLAGF…SDLHGSKIIL (234 aa)) are deubiquitination activity. A Peptidase C76 domain is found at 13–224 (EGTASTNQAD…IMSHYKVISF (212 aa)). Catalysis depends on residues Cys-33, Asp-163, and His-165. Disordered stretches follow at residues 281-350 (EEWT…LPSV), 2064-2131 (ITEG…PIIP), 2164-2360 (GHSG…PQPQ), and 2387-2407 (GMSD…GVTH). Over residues 293–302 (SGRTPPEKMT) the composition is skewed to basic and acidic residues. Residues 314-334 (TMDDDVIDLTGDDDMEDESEG) are compositionally biased toward acidic residues. Residues 2080 to 2091 (TQDHMEEPDNKQ) show a composition bias toward basic and acidic residues. Pro residues predominate over residues 2115–2131 (SPSPSPPVLTPIKPIIP). Polar residues predominate over residues 2173-2186 (HIQSSTPGPAQNTR). The segment covering 2387–2398 (GMSDDKNPEPCV) has biased composition (basic and acidic residues).

This sequence belongs to the herpesviridae large tegument protein family. Interacts with host CUL1 and CUL4A; these interactions inhibit the E3 ligase activity of cullins. Interacts with inner tegument protein. Interacts with capsid vertex specific component CVC2. Interacts with the major capsid protein/MCP.

It localises to the virion tegument. The protein resides in the host cytoplasm. It is found in the host nucleus. The catalysed reaction is Thiol-dependent hydrolysis of ester, thioester, amide, peptide and isopeptide bonds formed by the C-terminal Gly of ubiquitin (a 76-residue protein attached to proteins as an intracellular targeting signal).. In terms of biological role, large tegument protein that plays multiple roles in the viral cycle. During viral entry, remains associated with the capsid while most of the tegument is detached and participates in the capsid transport toward the host nucleus. Plays a role in the routing of the capsid at the nuclear pore complex and subsequent uncoating. Within the host nucleus, acts as a deneddylase and promotes the degradation of nuclear CRLs (cullin-RING ubiquitin ligases) and thereby stabilizes nuclear CRL substrates, while cytoplasmic CRLs remain unaffected. These modifications prevent host cell cycle S-phase progression and create a favorable environment allowing efficient viral genome replication. Participates later in the secondary envelopment of capsids. Indeed, plays a linker role for the association of the outer viral tegument to the capsids together with the inner tegument protein. The protein is Large tegument protein deneddylase of Apodemus sylvaticus (European woodmouse).